A 564-amino-acid chain; its full sequence is uncharacterized protein (564 aa).

Positions 1 to 17 (MRRPSTASLTRTPSRAS) are enriched in polar residues. Residues 1–564 (MRRPSTASLT…ASTPSSEVIS (564 aa)) form a disordered region. Composition is skewed to low complexity over residues 79–97 (SPRTPSRASPTRRLPRASP) and 114–134 (SPTGTPSTASPTGTPSSASPT). A compositionally biased stretch (polar residues) spans 153–168 (RSPSTASLTRTPSRAS). Over residues 170 to 179 (TRWPPRASPT) the composition is skewed to low complexity. The span at 250–271 (GSPPRASPMTPPRASPRTPPRA) shows a compositional bias: pro residues. The span at 272–299 (SPTTTPSRASLTRTPSWASPTTTPSRAS) shows a compositional bias: low complexity. The span at 318-351 (PTGTPSRASPTGTPSRASLTGSPSRASLTGTPSR) shows a compositional bias: polar residues. The segment covering 378 to 416 (RASLTGTSSTASLTRTPSRASLTRTQSSSSLTRTPSMAS) has biased composition (low complexity). Residues 467–564 (SRASLTRTPS…ASTPSSEVIS (98 aa)) show a composition bias toward polar residues.

This is an uncharacterized protein from Homo sapiens (Human).